Here is a 117-residue protein sequence, read N- to C-terminus: MWQPPTQNGTQLERHWFESVWRSHAAFCSCGDCIGHLQHLATNLGRPPAPQPPRDQHPPHIRGLPALPAPPSNRNSWPGTGGDAAGGEAGGSRGAGDGGDGELADEDLLDAIALAAE.

The segment at 43 to 104 is disordered; the sequence is NLGRPPAPQP…AGDGGDGELA (62 aa). Residues 79-98 are compositionally biased toward gly residues; it reads GTGGDAAGGEAGGSRGAGDG.

This Homo sapiens (Human) protein is ORF2 protein.